Consider the following 81-residue polypeptide: Trefoil factor 3 (81 aa).

The first 23 residues, 1-23 (MEARTFWLLVVAVLALGSSSSTG), serve as a signal peptide directing secretion. The P-type domain maps to 31–74 (NQCAVPAKDRVDCGYPEVTPEQCNNRGCCFDSSIHGVPWCFKPL). Cystine bridges form between C33–C59, C43–C58, and C53–C70.

In terms of assembly, monomer. Homodimer; disulfide-linked.

It localises to the secreted. The protein localises to the extracellular space. Its subcellular location is the extracellular matrix. The protein resides in the cytoplasm. Involved in the maintenance and repair of the intestinal mucosa. Promotes the mobility of epithelial cells in healing processes (motogen). The protein is Trefoil factor 3 (TFF3) of Bos taurus (Bovine).